Here is a 760-residue protein sequence, read N- to C-terminus: MENNRNFPARQFHSLTFFAGLCIGITPVAQALAAEGQANADDTLVVEASTPSLYAPQQSADPKFSRPVADTTRTMTVISEQVIKDQGATNLTDALKNVPGVGAFFAGENGNSTTGDAIYMRGADTSNSIYIDGIRDIGSVSRDTFNTEQVEVIKGPSGTDYGRSAPTGSINMISKQPRNDSGIDASASIGSAWFRRGTLDVNQVIGDTTAVRLNVMGEKTHDAGRDKVKNERYGVAPSVVFGLGTANRLYLNYLHVTQHNTPDGGIPTIGLPGYSAPSAGTAALNHSGKVDTHNFYGTDSDYDDSTTDTATMRFEHDINDNTTIRNTTRWSRVKQDYLMTAIMGGASNITQPTSDVNSWTWSRTANTKDVSNKILTNQTNLTSTFYTGAIGHDLSTGVEFTRETQTNYGVNPVTLPAVNIYHPDSSIHPGGLTRNGANANGQTDTFAIYAFDTLQITRDFELNGGIRLDNYHTEYDSATACGGSGRGAITCPAGVAKGSPVTTVDTAKSGNLVNWKAGALYHLTENGNVYINYAVSQQPPGGNNFALAQSGSGNSANRTDFKPQKANTSEIGTKWQVLDKRLLLTAALFRTDIENEVEQNDDGTYSQYGKKRVEGYEISVAGNITPAWQMIGGYTQQKATIKNGKDVAQDGSSSLPYTPEHAFTLWSQYQATDDISVGAGARYIGSMHKGSDGAVGTPAFTEGYWVADAKLGYRVNRNLDFQLNVYNLFDTDYVASINKSGYRYHPGEPRTFLLTANMHF.

The first 31 residues, 1–31, serve as a signal peptide directing secretion; sequence MENNRNFPARQFHSLTFFAGLCIGITPVAQA. Positions 67–175 constitute a TBDR plug domain; it reads PVADTTRTMT…PTGSINMISK (109 aa). One can recognise a TBDR beta-barrel domain in the interval 180-760; it reads DSGIDASASI…TFLLTANMHF (581 aa). A TonB C-terminal box motif is present at residues 743–760; sequence RYHPGEPRTFLLTANMHF.

This sequence belongs to the TonB-dependent receptor family.

The protein resides in the cell outer membrane. Functionally, involved in the active transport across the outer membrane of iron complexed with catecholate siderophores such as dihydroxybenzoylserine and dihydroxybenzoate. It derives its energy for transport by interacting with the trans-periplasmic membrane protein TonB. Can also transport catechol-substituted cephalosporins. Receptor for microcins M, H47 and E492. The chain is Catecholate siderophore receptor Fiu (fiu) from Escherichia coli O6:H1 (strain CFT073 / ATCC 700928 / UPEC).